The primary structure comprises 555 residues: Beta-hexosaminidase A (555 aa).

A signal peptide spans 1 to 18 (MRLLIPILIFALITTAVT). N47 carries an N-linked (GlcNAc...) asparagine glycan. The active-site Proton donor is E325. 3 N-linked (GlcNAc...) asparagine glycosylation sites follow: N351, N412, and N460.

This sequence belongs to the glycosyl hydrolase 20 family. Expressed in coelomocytes and neurons of the pharyngeal region and nerve cord.

The protein resides in the lysosome. The enzyme catalyses Hydrolysis of terminal non-reducing N-acetyl-D-hexosamine residues in N-acetyl-beta-D-hexosaminides.. Functionally, responsible for the degradation of GM2 gangliosides, and a variety of other molecules containing terminal N-acetyl hexosamines. Degrades chitotriose. This is Beta-hexosaminidase A (hex-1) from Caenorhabditis elegans.